The chain runs to 190 residues: Secreted isochorismatase effector Isc1 (190 aa).

Active-site residues include Asp26, Lys100, and Cys133.

Belongs to the isochorismatase family.

The protein localises to the secreted. It is found in the host cytoplasm. Its subcellular location is the host nucleus. The enzyme catalyses isochorismate + H2O = (2S,3S)-2,3-dihydroxy-2,3-dihydrobenzoate + pyruvate. In terms of biological role, secreted isochorismatase required for full virulence of V.dahliae. Suppresses salicylate-mediated innate immunity of the host by disrupting the plant salicylate metabolism pathway via hydrolysis of its isochorismate precursor. This Verticillium dahliae (strain VdLs.17 / ATCC MYA-4575 / FGSC 10137) (Verticillium wilt) protein is Secreted isochorismatase effector Isc1.